The sequence spans 366 residues: Spermidine/putrescine import ATP-binding protein PotA (366 aa).

Positions 14–247 constitute an ABC transporter domain; it reads ISARALRKVY…PADRFVADFI (234 aa). 49–56 is a binding site for ATP; it reads GPSGCGKT.

The protein belongs to the ABC transporter superfamily. Spermidine/putrescine importer (TC 3.A.1.11.1) family. As to quaternary structure, the complex is composed of two ATP-binding proteins (PotA), two transmembrane proteins (PotB and PotC) and a solute-binding protein (PotD).

The protein resides in the cell inner membrane. It catalyses the reaction ATP + H2O + polyamine-[polyamine-binding protein]Side 1 = ADP + phosphate + polyamineSide 2 + [polyamine-binding protein]Side 1.. Part of the ABC transporter complex PotABCD involved in spermidine/putrescine import. Responsible for energy coupling to the transport system. The sequence is that of Spermidine/putrescine import ATP-binding protein PotA from Ruegeria pomeroyi (strain ATCC 700808 / DSM 15171 / DSS-3) (Silicibacter pomeroyi).